Reading from the N-terminus, the 791-residue chain is Penicillin-binding protein 1A (791 aa).

At 1 to 6 (MYKSLF) the chain is on the cytoplasmic side. A helical; Signal-anchor for type II membrane protein membrane pass occupies residues 7–27 (FCLKILALLFLIGCGIVAYII). Topologically, residues 28-791 (YYYSRDLPDY…TEKDQSQEIY (764 aa)) are periplasmic. The tract at residues 49–220 (TRIYSRDGKL…SELNPEKNYA (172 aa)) is transglycosylase. The active-site Proton donor; for transglycosylase activity is the glutamate 87. A transpeptidase region spans residues 398–711 (DVIVVEPVKD…SSVVLPIFID (314 aa)). The active-site Acyl-ester intermediate; for transpeptidase activity is the serine 457.

In the N-terminal section; belongs to the glycosyltransferase 51 family. This sequence in the C-terminal section; belongs to the transpeptidase family.

Its subcellular location is the cell inner membrane. The enzyme catalyses [GlcNAc-(1-&gt;4)-Mur2Ac(oyl-L-Ala-gamma-D-Glu-L-Lys-D-Ala-D-Ala)](n)-di-trans,octa-cis-undecaprenyl diphosphate + beta-D-GlcNAc-(1-&gt;4)-Mur2Ac(oyl-L-Ala-gamma-D-Glu-L-Lys-D-Ala-D-Ala)-di-trans,octa-cis-undecaprenyl diphosphate = [GlcNAc-(1-&gt;4)-Mur2Ac(oyl-L-Ala-gamma-D-Glu-L-Lys-D-Ala-D-Ala)](n+1)-di-trans,octa-cis-undecaprenyl diphosphate + di-trans,octa-cis-undecaprenyl diphosphate + H(+). It carries out the reaction Preferential cleavage: (Ac)2-L-Lys-D-Ala-|-D-Ala. Also transpeptidation of peptidyl-alanyl moieties that are N-acyl substituents of D-alanine.. The protein operates within cell wall biogenesis; peptidoglycan biosynthesis. In terms of biological role, cell wall formation. Synthesis of cross-linked peptidoglycan from the lipid intermediates. The enzyme has a penicillin-insensitive transglycosylase N-terminal domain (formation of linear glycan strands) and a penicillin-sensitive transpeptidase C-terminal domain (cross-linking of the peptide subunits). This Rickettsia bellii (strain RML369-C) protein is Penicillin-binding protein 1A (mrcA).